A 180-amino-acid polypeptide reads, in one-letter code: Adenosine 5'-phosphosulfate reductase (180 aa).

Residues cysteine 57, cysteine 58, cysteine 140, and cysteine 143 each coordinate [4Fe-4S] cluster. Cysteine 168 functions as the Nucleophile; cysteine thiosulfonate intermediate in the catalytic mechanism.

It belongs to the PAPS reductase family. CysH subfamily. [4Fe-4S] cluster is required as a cofactor.

It is found in the cytoplasm. The catalysed reaction is [thioredoxin]-disulfide + sulfite + AMP + 2 H(+) = adenosine 5'-phosphosulfate + [thioredoxin]-dithiol. The protein operates within sulfur metabolism; hydrogen sulfide biosynthesis; sulfite from sulfate. Catalyzes the formation of sulfite from adenosine 5'-phosphosulfate (APS) using thioredoxin as an electron donor. The protein is Adenosine 5'-phosphosulfate reductase of Rhizobium tropici.